An 860-amino-acid polypeptide reads, in one-letter code: Alpha,alpha-trehalose-phosphate synthase [UDP-forming] 6 (860 aa).

Serine 5 bears the Phosphoserine mark. The glycosyltransferase stretch occupies residues 53 to 557 (DRIIIVANEL…ARSFLQDLER (505 aa)).

It in the N-terminal section; belongs to the glycosyltransferase 20 family. The protein in the C-terminal section; belongs to the trehalose phosphatase family. As to quaternary structure, binds to the phosphopeptide-binding site of GRF/14-3-3. Phosphorylated. Expressed in seedlings, leaves, stems, flowers, siliques and roots.

It catalyses the reaction D-glucose 6-phosphate + UDP-alpha-D-glucose = alpha,alpha-trehalose 6-phosphate + UDP + H(+). Its function is as follows. Regulates plant architecture, shape of epidermal pavement cells and branching of trichomes. The polypeptide is Alpha,alpha-trehalose-phosphate synthase [UDP-forming] 6 (Arabidopsis thaliana (Mouse-ear cress)).